The sequence spans 245 residues: 8-amino-3,8-dideoxy-manno-octulosonate cytidylyltransferase (245 aa).

This sequence belongs to the KdsB family.

The protein resides in the cytoplasm. It catalyses the reaction 8-amino-3,8-dideoxy-alpha-D-manno-octulosonate + CTP = CMP-8-amino-3,8-dideoxy-alpha-D-manno-oct-2-ulosonate + diphosphate. It functions in the pathway bacterial outer membrane biogenesis; lipopolysaccharide biosynthesis. Its function is as follows. Activates KDO8N (a required 8-carbon sugar) for incorporation into bacterial lipopolysaccharide in the Shewanella genus. In Shewanella baltica (strain OS195), this protein is 8-amino-3,8-dideoxy-manno-octulosonate cytidylyltransferase.